Here is a 362-residue protein sequence, read N- to C-terminus: 3-dehydroquinate synthase (362 aa).

Residues 70-75, 104-108, 128-129, Lys-141, and Lys-150 each bind NAD(+); these read DGESYK, GVVGD, and TT. Zn(2+) contacts are provided by Glu-183, His-246, and His-263.

Belongs to the sugar phosphate cyclases superfamily. Dehydroquinate synthase family. Co(2+) serves as cofactor. Zn(2+) is required as a cofactor. The cofactor is NAD(+).

The protein localises to the cytoplasm. It carries out the reaction 7-phospho-2-dehydro-3-deoxy-D-arabino-heptonate = 3-dehydroquinate + phosphate. It participates in metabolic intermediate biosynthesis; chorismate biosynthesis; chorismate from D-erythrose 4-phosphate and phosphoenolpyruvate: step 2/7. In terms of biological role, catalyzes the conversion of 3-deoxy-D-arabino-heptulosonate 7-phosphate (DAHP) to dehydroquinate (DHQ). The polypeptide is 3-dehydroquinate synthase (Saccharophagus degradans (strain 2-40 / ATCC 43961 / DSM 17024)).